A 472-amino-acid chain; its full sequence is MAGEDHPWQGSILYNLLMSAKQKHASQEEREVRLGAQCWGCACGAQPVLGGERLSGGQARSLLYRCCFCGENHPRQGGILYSMLTNARQPSVATQAPRARFGAPCWGCACGSAEPLVGREGLPAGQAPSLLYRCCFCGEEHPRQGSILYSLLTSAQQTHVSREAPEAHRRGEWWQLSYCTQSVGGPEGLQSTQAMAFLYRSYVCGEEQPQQISVASGTPVSADQTPATPQEQPRAPWWDASPGVQRLITLKDPQVVCEAASAGLLKTLRFVKYLPCFQILPLDQQLVLVRSCWAPLLMLELAQDHLHFEMMEIPETNTTQEMLTTRRQETEGPEPAEPQATEQPQMVSAEAGHLLPAAAVQAIKSFFFKCWSLNIDTKEYAYLKGTVLFNPDLPGLQCVKYIEGLQWRTQQILTEHIRMMQREYQIRSAELNSALFLLRFINSDVVTELFFRPIIGAVSMDDMMLEMLCAKL.

Tandem repeats lie at residues 1 to 67 (MAGE…YRCC), 68 to 135 (FCGE…YRCC), and 136 to 202 (FCGE…YRSY). A 4 X 67 AA tandem repeats region spans residues 1–255 (MAGEDHPWQG…RLITLKDPQV (255 aa)). 3 short sequence motifs (LXXLL motif) span residues 13 to 17 (LYNLL), 80 to 84 (LYSML), and 148 to 152 (LYSLL). The NR LBD domain occupies 190-471 (QSTQAMAFLY…DMMLEMLCAK (282 aa)). Residues 203 to 255 (VCGEEQPQQISVASGTPVSADQTPATPQEQPRAPWWDASPGVQRLITLKDPQV) form a 4; truncated repeat. A compositionally biased stretch (polar residues) spans 214–231 (VASGTPVSADQTPATPQE). 2 disordered regions span residues 214–238 (VASG…APWW) and 324–343 (TTRR…ATEQ). The AF-2 motif motif lies at 463–468 (MMLEML).

It belongs to the nuclear hormone receptor family. NR0 subfamily. In terms of assembly, homodimer. Interacts with NR5A1, NR5A2, NR0B2 and with COPS2. Interacts with ESRRB; represses ESRRB activity at the GATA6 promoter. As to expression, expressed in adult cerebral cortex, spinal cord, thymus, heart, lung, ovary, testis, adrenal gland, hypothalamus, spleen and kidney.

Its subcellular location is the nucleus. It is found in the cytoplasm. Functionally, nuclear receptor that lacks a DNA-binding domain and acts as a corepressor that inhibits the transcriptional activity of other nuclear receptors through heterodimeric interactions. Component of a cascade required for the development of the hypothalamic-pituitary-adrenal-gonadal axis. May also have a role in the development of the embryo and in the maintenance of embryonic stem cell pluripotency. The polypeptide is Nuclear receptor subfamily 0 group B member 1 (Nr0b1) (Mus musculus (Mouse)).